Here is a 55-residue protein sequence, read N- to C-terminus: Spermatid nuclear transition protein 1 (55 aa).

The segment covering 1-42 has biased composition (basic residues); it reads MSTSRKLKTHGMRRGKNRAPHKGVKRGGSKRKYRKSVLKSRK. A disordered region spans residues 1–55; sequence MSTSRKLKTHGMRRGKNRAPHKGVKRGGSKRKYRKSVLKSRKRGDDASRNYRSHL. Phosphoserine is present on residues serine 36 and serine 40.

The protein belongs to the nuclear transition protein 1 family. As to expression, testis-specific.

It is found in the nucleus. The protein localises to the chromosome. Its function is as follows. Plays a key role in the replacement of histones to protamine in the elongating spermatids of mammals. In condensing spermatids, loaded onto the nucleosomes, where it promotes the recruitment and processing of protamines, which are responsible for histone eviction. The histone H2AB1-H2BC1/TH2B dimer is required for loading of TNP1 onto chromatin. The polypeptide is Spermatid nuclear transition protein 1 (Mus musculus (Mouse)).